We begin with the raw amino-acid sequence, 611 residues long: Podocan (611 aa).

A signal peptide spans 1–23 (MAGSRGLPLLLLVLQLFLGPVLP). The LRRNT domain occupies 60–97 (PEPGPATVDCPRDCACSQEGVVDCGGIDLREFPGDLPE). 5 LRR repeats span residues 98-119 (HTNH…ELSR), 122-145 (RLET…AFEH), 148-169 (SLNY…LPNA), 170-190 (LISV…TFGQ), and 193-213 (NLRS…PDHM). A glycan (N-linked (GlcNAc...) asparagine) is linked at asparagine 215. 15 LRR repeats span residues 219–239 (NVEI…HLPP), 240–261 (ALYK…AFSE), 264–284 (NLRE…DNET), 290–311 (SLEY…LPRS), 312–332 (LVLL…VLTP), 335–358 (NLEY…AFQG), 361–382 (KLHT…LPRR), 383–403 (VRTL…DFAT), 406–427 (FLEE…RDAF), 432–453 (LLRS…LPKN), 477–490 (QLRE…RLRS), 503–523 (GLQL…GLPP), 524–545 (SLEY…AFDS), 548–569 (NLKG…ESAF), and 574–583 (HLQVLDIEGN). A glycan (N-linked (GlcNAc...) asparagine) is linked at asparagine 282. N-linked (GlcNAc...) asparagine glycosylation is present at asparagine 411. The disordered stretch occupies residues 585–611 (EFGNGSKDKDEEEEEEEEEEDEEEETR). Positions 594-611 (DEEEEEEEEEEDEEEETR) are enriched in acidic residues.

It belongs to the small leucine-rich proteoglycan (SLRP) family. SLRP class V subfamily. In terms of assembly, binds to type I collagen. In terms of processing, N-glycosylated. Kidney. Expressed in podocytes and likely vascular endothelial cells within the glomerulus.

The protein localises to the secreted. The protein resides in the extracellular space. Its subcellular location is the extracellular matrix. In terms of biological role, negatively regulates cell proliferation and cell migration, especially in smooth muscle cells. This Mus musculus (Mouse) protein is Podocan (Podn).